The following is a 228-amino-acid chain: Thermonuclease (228 aa).

Positions 1–23 (MTEYLLSAGICMAIVSILLIGMA) are cleaved as a signal peptide. Positions 24–60 (ISNVSKGQYAKRFFFFATSCLVLTLVVVSSLSSSANA) are excised as a propeptide. The segment covering 58 to 70 (ANASQTDNGVNRS) has biased composition (polar residues). A disordered region spans residues 58 to 83 (ANASQTDNGVNRSGSEDPTVYSATST). D100 is a Ca(2+) binding site. R114 is an active-site residue. Ca(2+) contacts are provided by D119 and T120. Catalysis depends on residues E122 and R166.

This sequence belongs to the thermonuclease family. Ca(2+) is required as a cofactor.

It localises to the secreted. The catalysed reaction is Endonucleolytic cleavage to nucleoside 3'-phosphates and 3'-phosphooligonucleotide end-products.. In terms of biological role, enzyme that catalyzes the hydrolysis of both DNA and RNA at the 5' position of the phosphodiester bond. The sequence is that of Thermonuclease (nuc) from Staphylococcus aureus (strain Mu50 / ATCC 700699).